Consider the following 307-residue polypeptide: tRNA dimethylallyltransferase (307 aa).

Position 11–18 (11–18 (GPTGSGKT)) interacts with ATP. 13 to 18 (TGSGKT) contacts substrate. An interaction with substrate tRNA region spans residues 36 to 39 (DSVA).

This sequence belongs to the IPP transferase family. Monomer. Mg(2+) is required as a cofactor.

The catalysed reaction is adenosine(37) in tRNA + dimethylallyl diphosphate = N(6)-dimethylallyladenosine(37) in tRNA + diphosphate. Catalyzes the transfer of a dimethylallyl group onto the adenine at position 37 in tRNAs that read codons beginning with uridine, leading to the formation of N6-(dimethylallyl)adenosine (i(6)A). This Koribacter versatilis (strain Ellin345) protein is tRNA dimethylallyltransferase.